The primary structure comprises 289 residues: 4-diphosphocytidyl-2-C-methyl-D-erythritol kinase (289 aa).

Residue Lys-13 is part of the active site. 101-111 (PMGGGLGGGSS) provides a ligand contact to ATP. Residue Asp-143 is part of the active site.

This sequence belongs to the GHMP kinase family. IspE subfamily.

The enzyme catalyses 4-CDP-2-C-methyl-D-erythritol + ATP = 4-CDP-2-C-methyl-D-erythritol 2-phosphate + ADP + H(+). The protein operates within isoprenoid biosynthesis; isopentenyl diphosphate biosynthesis via DXP pathway; isopentenyl diphosphate from 1-deoxy-D-xylulose 5-phosphate: step 3/6. Functionally, catalyzes the phosphorylation of the position 2 hydroxy group of 4-diphosphocytidyl-2C-methyl-D-erythritol. The chain is 4-diphosphocytidyl-2-C-methyl-D-erythritol kinase from Janthinobacterium sp. (strain Marseille) (Minibacterium massiliensis).